Reading from the N-terminus, the 136-residue chain is Selenoprotein M (136 aa).

The first 19 residues, 1–19 (MWLPLPLLLGLLQLQPILS), serve as a signal peptide directing secretion. Residues C38 and U41 each act as nucleophile in the active site. A cross-link (cysteinyl-selenocysteine (Cys-Sec)) is located at residues 38 to 41 (CGGU). U41 is a non-standard amino acid (selenocysteine). The disordered stretch occupies residues 111-136 (SSPDAPVPAEFKMAPARASGDTKEDL). The Prevents secretion from ER motif lies at 133–136 (KEDL).

The protein belongs to the selenoprotein M/F family.

Its subcellular location is the endoplasmic reticulum. Functionally, may function as a thiol-disulfide oxidoreductase that participates in disulfide bond formation. In Xenopus laevis (African clawed frog), this protein is Selenoprotein M (selenom).